The following is a 342-amino-acid chain: N-acetyl-gamma-glutamyl-phosphate reductase (342 aa).

Cys149 is an active-site residue.

This sequence belongs to the NAGSA dehydrogenase family. Type 1 subfamily.

The protein resides in the cytoplasm. The catalysed reaction is N-acetyl-L-glutamate 5-semialdehyde + phosphate + NADP(+) = N-acetyl-L-glutamyl 5-phosphate + NADPH + H(+). It participates in amino-acid biosynthesis; L-arginine biosynthesis; N(2)-acetyl-L-ornithine from L-glutamate: step 3/4. Functionally, catalyzes the NADPH-dependent reduction of N-acetyl-5-glutamyl phosphate to yield N-acetyl-L-glutamate 5-semialdehyde. This Laribacter hongkongensis (strain HLHK9) protein is N-acetyl-gamma-glutamyl-phosphate reductase.